A 184-amino-acid polypeptide reads, in one-letter code: Small ribosomal subunit protein uS7 (184 aa).

It belongs to the universal ribosomal protein uS7 family. Part of the 30S ribosomal subunit.

Functionally, one of the primary rRNA binding proteins, it binds directly to 16S rRNA where it nucleates assembly of the head domain of the 30S subunit. Is located at the subunit interface close to the decoding center. The protein is Small ribosomal subunit protein uS7 of Thermoplasma volcanium (strain ATCC 51530 / DSM 4299 / JCM 9571 / NBRC 15438 / GSS1).